We begin with the raw amino-acid sequence, 225 residues long: UPF0758 protein SO_4248 (225 aa).

The region spanning 102-224 (VLTNPDLTRD…IVSFAERGWI (123 aa)) is the MPN domain. Zn(2+)-binding residues include H173, H175, and D186. Residues 173–186 (HNHPSGIAEPSQAD) carry the JAMM motif motif.

Belongs to the UPF0758 family.

The polypeptide is UPF0758 protein SO_4248 (Shewanella oneidensis (strain ATCC 700550 / JCM 31522 / CIP 106686 / LMG 19005 / NCIMB 14063 / MR-1)).